The chain runs to 647 residues: Zinc finger protein 567 (647 aa).

The KRAB domain maps to 32 to 77 (MDVMLENYCHLISVGCHMTKPDVILKLERGEEPWTSFKGHTCLEEN). Residues K173, K202, and K217 each participate in a glycyl lysine isopeptide (Lys-Gly) (interchain with G-Cter in SUMO2) cross-link. The segment at 210–232 (FEYNDCEKAFLKRGGPVTHSRTY) adopts a C2H2-type 1; degenerate zinc-finger fold. 7 C2H2-type zinc fingers span residues 253–275 (HTCT…QGIH), 281–303 (YQCH…QRTH), 309–331 (FVCN…QRTH), 337–359 (YECP…QRTH), 365–387 (YECS…QRIH), 393–415 (YICK…QRTH), and 421–443 (YICN…EKTH). A Glycyl lysine isopeptide (Lys-Gly) (interchain with G-Cter in SUMO2) cross-link involves residue K447. C2H2-type zinc fingers lie at residues 449–471 (YICN…QRTH), 477–499 (YECP…HRTH), 505–527 (YECN…QRIH), 533–555 (YICN…QKIH), 561–583 (YECP…QRTH), 589–611 (YKCS…QRTH), and 617–639 (YICN…QRTH).

The protein belongs to the krueppel C2H2-type zinc-finger protein family.

The protein localises to the nucleus. May be involved in transcriptional regulation. The protein is Zinc finger protein 567 (ZNF567) of Bos taurus (Bovine).